Here is a 406-residue protein sequence, read N- to C-terminus: Acetate kinase (406 aa).

Mg(2+) is bound at residue Asn7. Lys14 contacts ATP. Arg90 is a binding site for substrate. Asp147 functions as the Proton donor/acceptor in the catalytic mechanism. ATP-binding positions include 207–211 (HLGNG), 283–285 (DMR), and 331–335 (GVGEN). Glu385 contributes to the Mg(2+) binding site.

The protein belongs to the acetokinase family. Homodimer. Requires Mg(2+) as cofactor. Mn(2+) is required as a cofactor.

The protein localises to the cytoplasm. The enzyme catalyses acetate + ATP = acetyl phosphate + ADP. Its pathway is metabolic intermediate biosynthesis; acetyl-CoA biosynthesis; acetyl-CoA from acetate: step 1/2. Functionally, catalyzes the formation of acetyl phosphate from acetate and ATP. Can also catalyze the reverse reaction. The sequence is that of Acetate kinase from Fervidobacterium nodosum (strain ATCC 35602 / DSM 5306 / Rt17-B1).